The sequence spans 505 residues: 2,3-bisphosphoglycerate-independent phosphoglycerate mutase (505 aa).

2 residues coordinate Mn(2+): aspartate 12 and serine 62. Catalysis depends on serine 62, which acts as the Phosphoserine intermediate. Residues histidine 123, 153–154, arginine 185, arginine 191, 257–260, and lysine 330 each bind substrate; these read RD and RPDR. Aspartate 397, histidine 401, aspartate 438, histidine 439, and histidine 456 together coordinate Mn(2+).

Belongs to the BPG-independent phosphoglycerate mutase family. Monomer. The cofactor is Mn(2+).

The catalysed reaction is (2R)-2-phosphoglycerate = (2R)-3-phosphoglycerate. The protein operates within carbohydrate degradation; glycolysis; pyruvate from D-glyceraldehyde 3-phosphate: step 3/5. Its function is as follows. Catalyzes the interconversion of 2-phosphoglycerate and 3-phosphoglycerate. The chain is 2,3-bisphosphoglycerate-independent phosphoglycerate mutase from Staphylococcus aureus (strain COL).